The chain runs to 95 residues: Large ribosomal subunit protein uL23 (95 aa).

It belongs to the universal ribosomal protein uL23 family. As to quaternary structure, contacts protein L29, and trigger factor when it is bound to the ribosome. Part of the 50S ribosomal subunit.

In terms of biological role, one of the early assembly proteins it binds 23S rRNA. One of the proteins that surrounds the polypeptide exit tunnel on the outside of the ribosome. Forms the main docking site for trigger factor binding to the ribosome. This is Large ribosomal subunit protein uL23 from Geobacillus stearothermophilus (Bacillus stearothermophilus).